The following is a 375-amino-acid chain: Actin (375 aa).

This sequence belongs to the actin family.

The protein localises to the cytoplasm. The protein resides in the cytoskeleton. The enzyme catalyses ATP + H2O = ADP + phosphate + H(+). In terms of biological role, actins are highly conserved proteins that are involved in various types of cell motility and are ubiquitously expressed in all eukaryotic cells. The chain is Actin from Giardia intestinalis (Giardia lamblia).